The following is a 163-amino-acid chain: 2-C-methyl-D-erythritol 2,4-cyclodiphosphate synthase (163 aa).

A divalent metal cation-binding residues include Asp-12 and His-14. 4-CDP-2-C-methyl-D-erythritol 2-phosphate is bound by residues 12–14 (DVH) and 38–39 (HS). His-46 contributes to the a divalent metal cation binding site. Residues 60–62 (DIG), 136–139 (TTSE), Phe-143, and Arg-146 each bind 4-CDP-2-C-methyl-D-erythritol 2-phosphate.

The protein belongs to the IspF family. As to quaternary structure, homotrimer. It depends on a divalent metal cation as a cofactor.

It catalyses the reaction 4-CDP-2-C-methyl-D-erythritol 2-phosphate = 2-C-methyl-D-erythritol 2,4-cyclic diphosphate + CMP. It functions in the pathway isoprenoid biosynthesis; isopentenyl diphosphate biosynthesis via DXP pathway; isopentenyl diphosphate from 1-deoxy-D-xylulose 5-phosphate: step 4/6. Functionally, involved in the biosynthesis of isopentenyl diphosphate (IPP) and dimethylallyl diphosphate (DMAPP), two major building blocks of isoprenoid compounds. Catalyzes the conversion of 4-diphosphocytidyl-2-C-methyl-D-erythritol 2-phosphate (CDP-ME2P) to 2-C-methyl-D-erythritol 2,4-cyclodiphosphate (ME-CPP) with a corresponding release of cytidine 5-monophosphate (CMP). The sequence is that of 2-C-methyl-D-erythritol 2,4-cyclodiphosphate synthase from Xanthomonas oryzae pv. oryzae (strain MAFF 311018).